Consider the following 340-residue polypeptide: MPEWPPCLSVAPALVITMAAGKGAPLSPSAENRWRLSEPELGRGCKPVLLEKTNRLGPEAAVGRAGRDVGSAELALLVAPGKPRPGKPLPPKTRGEQRQSAFTELPRMKDRQVDAQAQEREHDDPTGQPGAPQLTQNIPRGPAGSKVFSVWPSGARSEQRSAFSKPTKRPAERPELTSVFPAGESADALGELSGLLNTTDLACWGRLSTPKLLVGDLWNLQALPQNAPLCSTFLGAPTLWLEHTQAQVPPPSSSSTTSWALLPPTLTSLGLSTQNWCAKCNLSFRLTSDLVFHMRSHHKKEHAGPDPHSQKRREEALACPVCQEHFRERHHLSRHMTSHS.

The segment at 72–187 (AELALLVAPG…SVFPAGESAD (116 aa)) is important for transcriptional repression activity. The tract at residues 77–180 (LVAPGKPRPG…AERPELTSVF (104 aa)) is disordered. A compositionally biased stretch (pro residues) spans 82–91 (KPRPGKPLPP). The segment covering 106–125 (PRMKDRQVDAQAQEREHDDP) has biased composition (basic and acidic residues). 2 C2H2-type zinc fingers span residues 275-302 (NWCA…KKEH) and 317-339 (LACP…MTSH). The Nuclear localization signal motif lies at 298–305 (HKKEHAGP).

This sequence belongs to the krueppel C2H2-type zinc-finger protein family. Interacts with OLIG2.

It localises to the nucleus. Functionally, transcriptional repressor. Plays a role in oligodendrocyte differentiation, together with OLIG2. Mediates Notch signaling-activated formation of oligodendrocyte precursors. Promotes differentiation of adult neural stem progenitor cells (NSPCs) into mature oligodendrocytes and contributes to remyelination following nerve injury. This Homo sapiens (Human) protein is Zinc finger protein 488 (ZNF488).